Consider the following 368-residue polypeptide: Endophilin-A2 (368 aa).

A membrane-binding amphipathic helix region spans residues 1–21 (MSVAGLKKQFYKASQLVSEKV). Positions 18–249 (SEKVGGAEGT…LKRRVREASS (232 aa)) constitute a BAR domain. Residues 60-87 (PNPASRAKLTMLNTVSKIRGQVKNPGYP) are required for dimerization upon membrane association. Positions 180–250 (DEELRQALEK…KRRVREASSR (71 aa)) form a coiled coil. Positions 218-254 (LVDAQLDYHRQAVQILEELADKLKRRVREASSRPRRE) are interaction with ARC. The tract at residues 243-309 (RVREASSRPR…SKSMPPLDQP (67 aa)) is disordered. Basic and acidic residues predominate over residues 245 to 261 (REASSRPRREFKPRPQE). Residue Ser-288 is modified to Phosphoserine. At Thr-298 the chain carries Phosphothreonine. In terms of domain architecture, SH3 spans 306–365 (LDQPSCKALYDFEPENDGELGFREGDLITLTNQIDENWYEGMLHGQSGFFPLSYVQVLVP). At Tyr-315 the chain carries Phosphotyrosine.

It belongs to the endophilin family. As to quaternary structure, interacts with ARC, SYNJ1 and DNM1. Interacts with PDCD6IP. Interacts with BIN2. Detected in brain and testis (at protein level). Ubiquitous.

Its subcellular location is the cytoplasm. It is found in the early endosome membrane. The protein localises to the cell projection. The protein resides in the podosome. Its function is as follows. Implicated in endocytosis. May recruit other proteins to membranes with high curvature. This is Endophilin-A2 (Sh3gl1) from Rattus norvegicus (Rat).